Here is a 338-residue protein sequence, read N- to C-terminus: Ketol-acid reductoisomerase (NADP(+)) (338 aa).

Positions Met-1–Thr-181 constitute a KARI N-terminal Rossmann domain. Residues Tyr-24 to Gln-27, Arg-47, and Ser-52 contribute to the NADP(+) site. Residue His-107 is part of the active site. Gly-133 contacts NADP(+). The KARI C-terminal knotted domain maps to Thr-182–Ile-327. Residues Asp-190, Glu-194, Glu-226, and Glu-230 each coordinate Mg(2+). Residue Ser-251 participates in substrate binding.

The protein belongs to the ketol-acid reductoisomerase family. It depends on Mg(2+) as a cofactor.

The enzyme catalyses (2R)-2,3-dihydroxy-3-methylbutanoate + NADP(+) = (2S)-2-acetolactate + NADPH + H(+). It carries out the reaction (2R,3R)-2,3-dihydroxy-3-methylpentanoate + NADP(+) = (S)-2-ethyl-2-hydroxy-3-oxobutanoate + NADPH + H(+). The protein operates within amino-acid biosynthesis; L-isoleucine biosynthesis; L-isoleucine from 2-oxobutanoate: step 2/4. It functions in the pathway amino-acid biosynthesis; L-valine biosynthesis; L-valine from pyruvate: step 2/4. Functionally, involved in the biosynthesis of branched-chain amino acids (BCAA). Catalyzes an alkyl-migration followed by a ketol-acid reduction of (S)-2-acetolactate (S2AL) to yield (R)-2,3-dihydroxy-isovalerate. In the isomerase reaction, S2AL is rearranged via a Mg-dependent methyl migration to produce 3-hydroxy-3-methyl-2-ketobutyrate (HMKB). In the reductase reaction, this 2-ketoacid undergoes a metal-dependent reduction by NADPH to yield (R)-2,3-dihydroxy-isovalerate. The protein is Ketol-acid reductoisomerase (NADP(+)) of Nitrosomonas europaea (strain ATCC 19718 / CIP 103999 / KCTC 2705 / NBRC 14298).